Reading from the N-terminus, the 1358-residue chain is Regulatory protein SIR4 (1358 aa).

Polar residues predominate over residues 1–15; the sequence is MPNDNKTPNRSSTPK. Disordered regions lie at residues 1–98, 252–277, 356–466, 498–544, 677–726, 752–787, and 913–970; these read MPND…PHSN, SLSV…SPGI, HDEK…PPEI, VQGE…ISNG, ASTE…EDEQ, VSDS…DLDT, and HSQE…ENLS. The span at 26–39 shows a compositional bias: basic and acidic residues; the sequence is KIPEREEKSNEVKT. Polar residues-rich tracts occupy residues 49-66 and 75-96; these read KSKN…SPHQ and HKQL…SFPH. Basic and acidic residues predominate over residues 373 to 388; the sequence is QKMKEDADLKRMEILK. Residues 428 to 437 show a composition bias toward polar residues; that stretch reads QENNYNSTSR. The span at 452 to 464 shows a compositional bias: basic and acidic residues; the sequence is KNGENKKIGKRPP. Over residues 507–517 the composition is skewed to polar residues; the sequence is RNNTLNVTPSK. The residue at position 692 (Ser-692) is a Phosphoserine. The span at 706–720 shows a compositional bias: polar residues; sequence FPVSLSQPSKKSFAN. Positions 754-766 are enriched in acidic residues; that stretch reads DSDDSSSDNDSLT. The span at 777 to 787 shows a compositional bias: basic and acidic residues; the sequence is NEIKVTNDLDT. The segment covering 916-932 has biased composition (polar residues); it reads EQNSSSAKPSQIPTVSS. A Glycyl lysine isopeptide (Lys-Gly) (interchain with G-Cter in SUMO) cross-link involves residue Lys-1128. A coiled-coil region spans residues 1271–1347; sequence LSFVDIVLSK…DAKINKLMEK (77 aa).

In terms of assembly, homodimer. Interacts with MPS3. Interacts with RIS1. Interacts with SIR1, SIR2 and SIR3. Interacts with YKU80. Interacts with UBP10. Interacts with RAP1 (via C-terminus).

The protein resides in the nucleus. Its function is as follows. The proteins SIR1 through SIR4 are required for transcriptional repression of the silent mating type loci, HML and HMR. The proteins SIR2 through SIR4 repress mulitple loci by modulating chromatin structure. Involves the compaction of chromatin fiber into a more condensed form. This Saccharomyces cerevisiae (strain ATCC 204508 / S288c) (Baker's yeast) protein is Regulatory protein SIR4 (SIR4).